The primary structure comprises 432 residues: Glutamate-1-semialdehyde 2,1-aminomutase (432 aa).

N6-(pyridoxal phosphate)lysine is present on lysine 265.

It belongs to the class-III pyridoxal-phosphate-dependent aminotransferase family. HemL subfamily. In terms of assembly, homodimer. The cofactor is pyridoxal 5'-phosphate.

The protein resides in the cytoplasm. The catalysed reaction is (S)-4-amino-5-oxopentanoate = 5-aminolevulinate. It participates in porphyrin-containing compound metabolism; protoporphyrin-IX biosynthesis; 5-aminolevulinate from L-glutamyl-tRNA(Glu): step 2/2. The sequence is that of Glutamate-1-semialdehyde 2,1-aminomutase from Photobacterium profundum (strain SS9).